Reading from the N-terminus, the 416-residue chain is Squamosa promoter-binding-like protein 8 (416 aa).

Positions 11 to 53 (SSCDDFGYNATPPPPPSLLPIMDQDGGGGSIQRDHHHHHNHQQ) are disordered. The SBP-type zinc finger occupies 182–260 (PPRCQAEGCK…ADHNRRRRKS (79 aa)). Zn(2+) contacts are provided by Cys-185, Cys-190, Cys-207, His-210, Cys-227, Cys-230, His-234, and Cys-246. The Bipartite nuclear localization signal signature appears at 243 to 259 (KKSCRKRLADHNRRRRK). Residues 250–299 (LADHNRRRRKSKPSDGEHSGEKRRAQANKSAATKDKAGSSSKNAGIGDGF) are disordered. Basic and acidic residues predominate over residues 261–273 (KPSDGEHSGEKRR).

Expressed in stems, leaf sheaths, and young panicles.

Its subcellular location is the nucleus. In terms of biological role, probable transcription factor that plays an important role in building the laminar joint between leaf blade and leaf sheath boundary, thereby controlling ligule and auricle development. This is Squamosa promoter-binding-like protein 8 (SPL8) from Oryza sativa subsp. indica (Rice).